The following is a 676-amino-acid chain: Solute carrier family 26 member 10 (676 aa).

The disordered stretch occupies residues methionine 1–serine 24. 11 helical membrane passes run alanine 101–leucine 121, valine 124–glycine 144, leucine 149–valine 165, valine 190–leucine 210, alanine 226–leucine 246, alanine 267–valine 287, leucine 300–threonine 320, isoleucine 353–serine 373, isoleucine 398–valine 418, leucine 426–phenylalanine 446, and isoleucine 487–valine 507. The STAS domain occupies glutamate 539–alanine 660.

It belongs to the SLC26A/SulP transporter (TC 2.A.53) family.

It localises to the membrane. Its function is as follows. Chloride/bicarbonate exchanger. In Mus musculus (Mouse), this protein is Solute carrier family 26 member 10 (Slc26a10).